A 26-amino-acid chain; its full sequence is Coenzyme PQQ synthesis protein A (26 aa).

Residues E16–Y20 constitute a cross-link (pyrroloquinoline quinone (Glu-Tyr)).

The protein belongs to the PqqA family.

It functions in the pathway cofactor biosynthesis; pyrroloquinoline quinone biosynthesis. Functionally, required for coenzyme pyrroloquinoline quinone (PQQ) biosynthesis. PQQ is probably formed by cross-linking a specific glutamate to a specific tyrosine residue and excising these residues from the peptide. This Cereibacter sphaeroides (strain ATCC 17029 / ATH 2.4.9) (Rhodobacter sphaeroides) protein is Coenzyme PQQ synthesis protein A.